The chain runs to 299 residues: Tyrosine recombinase XerC (299 aa).

In terms of domain architecture, Core-binding (CB) spans 1–85; that stretch reads MQADLDAFLD…ALRGFYRYLL (85 aa). The Tyr recombinase domain maps to 106–285; the sequence is RLPRTLDADR…DFQHLAAVYD (180 aa). Active-site residues include Arg-146, Lys-170, His-237, Arg-240, and His-263. Tyr-272 serves as the catalytic O-(3'-phospho-DNA)-tyrosine intermediate.

The protein belongs to the 'phage' integrase family. XerC subfamily. In terms of assembly, forms a cyclic heterotetrameric complex composed of two molecules of XerC and two molecules of XerD.

Its subcellular location is the cytoplasm. Site-specific tyrosine recombinase, which acts by catalyzing the cutting and rejoining of the recombining DNA molecules. The XerC-XerD complex is essential to convert dimers of the bacterial chromosome into monomers to permit their segregation at cell division. It also contributes to the segregational stability of plasmids. The polypeptide is Tyrosine recombinase XerC (Azotobacter vinelandii (strain DJ / ATCC BAA-1303)).